Here is a 333-residue protein sequence, read N- to C-terminus: NADH-quinone oxidoreductase subunit H (333 aa).

8 helical membrane-spanning segments follow: residues 8-28, 75-95, 108-128, 154-174, 191-211, 251-271, 273-293, and 312-332; these read VLAAALIALAFVAVNAAYLVW, ILFMVAPVLAMFPALMSFVTI, IGLLVILAFASFAGLAILLAG, MLITAITVVLVSGSVDFIEIV, PGLFNIFMPISFLIFFICSLA, IVIGACLTTLLFLGGWDCPFG, FPGVWWFLIKIYILIFTFIWI, and ILIPLSLINLLLTAGFIKVFA.

It belongs to the complex I subunit 1 family. In terms of assembly, NDH-1 is composed of 14 different subunits. Subunits NuoA, H, J, K, L, M, N constitute the membrane sector of the complex.

It is found in the cell inner membrane. The enzyme catalyses a quinone + NADH + 5 H(+)(in) = a quinol + NAD(+) + 4 H(+)(out). Its function is as follows. NDH-1 shuttles electrons from NADH, via FMN and iron-sulfur (Fe-S) centers, to quinones in the respiratory chain. The immediate electron acceptor for the enzyme in this species is believed to be ubiquinone. Couples the redox reaction to proton translocation (for every two electrons transferred, four hydrogen ions are translocated across the cytoplasmic membrane), and thus conserves the redox energy in a proton gradient. This subunit may bind ubiquinone. The polypeptide is NADH-quinone oxidoreductase subunit H (Desulfotalea psychrophila (strain LSv54 / DSM 12343)).